The sequence spans 382 residues: Alkanesulfonate monooxygenase (382 aa).

This sequence belongs to the SsuD family.

It carries out the reaction an alkanesulfonate + FMNH2 + O2 = an aldehyde + FMN + sulfite + H2O + 2 H(+). Catalyzes the desulfonation of aliphatic sulfonates. The polypeptide is Alkanesulfonate monooxygenase (Pseudomonas putida (strain ATCC 700007 / DSM 6899 / JCM 31910 / BCRC 17059 / LMG 24140 / F1)).